The following is a 550-amino-acid chain: Arginine--tRNA ligase (550 aa).

The 'HIGH' region motif lies at 130–140 (ANPTGPIHLGG).

Belongs to the class-I aminoacyl-tRNA synthetase family. As to quaternary structure, monomer.

Its subcellular location is the cytoplasm. It carries out the reaction tRNA(Arg) + L-arginine + ATP = L-arginyl-tRNA(Arg) + AMP + diphosphate. This is Arginine--tRNA ligase (argS) from Corynebacterium glutamicum (strain ATCC 13032 / DSM 20300 / JCM 1318 / BCRC 11384 / CCUG 27702 / LMG 3730 / NBRC 12168 / NCIMB 10025 / NRRL B-2784 / 534).